The sequence spans 161 residues: Allophycocyanin alpha chain (161 aa).

Position 71 is an N4-methylasparagine (Asn71). Cys81 serves as a coordination point for (2R,3E)-phycocyanobilin.

This sequence belongs to the phycobiliprotein family. As to quaternary structure, heterodimer of an alpha and a beta chain. Contains one covalently linked phycocyanobilin chromophore.

It localises to the cellular thylakoid membrane. In terms of biological role, light-harvesting photosynthetic bile pigment-protein from the phycobiliprotein complex. Allophycocyanin has a maximum absorption at approximately 650 nanometers. In Synechocystis sp. (strain ATCC 27184 / PCC 6803 / Kazusa), this protein is Allophycocyanin alpha chain (apcA).